A 34-amino-acid polypeptide reads, in one-letter code: Photosystem II reaction center protein M (34 aa).

Residues 5–25 traverse the membrane as a helical segment; it reads ILAFIATALFILVPTAFLLII.

The protein belongs to the PsbM family. PSII is composed of 1 copy each of membrane proteins PsbA, PsbB, PsbC, PsbD, PsbE, PsbF, PsbH, PsbI, PsbJ, PsbK, PsbL, PsbM, PsbT, PsbX, PsbY, PsbZ, Psb30/Ycf12, at least 3 peripheral proteins of the oxygen-evolving complex and a large number of cofactors. It forms dimeric complexes.

The protein resides in the plastid. It localises to the chloroplast thylakoid membrane. In terms of biological role, one of the components of the core complex of photosystem II (PSII). PSII is a light-driven water:plastoquinone oxidoreductase that uses light energy to abstract electrons from H(2)O, generating O(2) and a proton gradient subsequently used for ATP formation. It consists of a core antenna complex that captures photons, and an electron transfer chain that converts photonic excitation into a charge separation. This subunit is found at the monomer-monomer interface. This chain is Photosystem II reaction center protein M, found in Calycanthus floridus var. glaucus (Eastern sweetshrub).